Here is a 70-residue protein sequence, read N- to C-terminus: Beta sliding clamp (70 aa).

The protein belongs to the beta sliding clamp family. In terms of assembly, forms a ring-shaped head-to-tail homodimer around DNA which binds and tethers DNA polymerases and other proteins to the DNA. The DNA replisome complex has a single clamp-loading complex (3 tau and 1 each of delta, delta', psi and chi subunits) which binds 3 Pol III cores (1 core on the leading strand and 2 on the lagging strand) each with a beta sliding clamp dimer. Additional proteins in the replisome are other copies of gamma, psi and chi, Ssb, DNA helicase and RNA primase.

Its subcellular location is the cytoplasm. In terms of biological role, confers DNA tethering and processivity to DNA polymerases and other proteins. Acts as a clamp, forming a ring around DNA (a reaction catalyzed by the clamp-loading complex) which diffuses in an ATP-independent manner freely and bidirectionally along dsDNA. Initially characterized for its ability to contact the catalytic subunit of DNA polymerase III (Pol III), a complex, multichain enzyme responsible for most of the replicative synthesis in bacteria; Pol III exhibits 3'-5' exonuclease proofreading activity. The beta chain is required for initiation of replication as well as for processivity of DNA replication. This Rhodobacter capsulatus (Rhodopseudomonas capsulata) protein is Beta sliding clamp (dnaN).